Reading from the N-terminus, the 221-residue chain is Urease accessory protein UreG (221 aa).

19–26 provides a ligand contact to GTP; the sequence is GPVGSGKT.

This sequence belongs to the SIMIBI class G3E GTPase family. UreG subfamily. In terms of assembly, homodimer. UreD, UreF and UreG form a complex that acts as a GTP-hydrolysis-dependent molecular chaperone, activating the urease apoprotein by helping to assemble the nickel containing metallocenter of UreC. The UreE protein probably delivers the nickel.

The protein resides in the cytoplasm. Functionally, facilitates the functional incorporation of the urease nickel metallocenter. This process requires GTP hydrolysis, probably effectuated by UreG. Expression of the urease operon increases the likelihood of bacterial survival by contributing to acid resistance in vitro and in vivo in BALB/c mice. Y.enterocolitica enters the body via an oral path and must survive the acidic stomach before being able to colonize the intestinal mucosa. The protein is Urease accessory protein UreG of Yersinia enterocolitica.